The chain runs to 80 residues: uncharacterized protein (80 aa).

This sequence belongs to the BolA/IbaG family.

This is an uncharacterized protein from Buchnera aphidicola subsp. Acyrthosiphon pisum (strain APS) (Acyrthosiphon pisum symbiotic bacterium).